The primary structure comprises 485 residues: Cysteine--tRNA ligase (485 aa).

Position 27 (Cys-27) interacts with Zn(2+). A 'HIGH' region motif is present at residues 29–39; the sequence is ITAYDFSHIGH. The Zn(2+) site is built by Cys-208, His-233, and Glu-237. A 'KMSKS' region motif is present at residues 265 to 269; it reads KMSKS. Lys-268 contacts ATP.

This sequence belongs to the class-I aminoacyl-tRNA synthetase family. In terms of assembly, monomer. Requires Zn(2+) as cofactor.

The protein localises to the cytoplasm. The catalysed reaction is tRNA(Cys) + L-cysteine + ATP = L-cysteinyl-tRNA(Cys) + AMP + diphosphate. This Lawsonia intracellularis (strain PHE/MN1-00) protein is Cysteine--tRNA ligase.